A 222-amino-acid chain; its full sequence is Type II restriction enzyme MjaI (222 aa).

The catalysed reaction is Endonucleolytic cleavage of DNA to give specific double-stranded fragments with terminal 5'-phosphates.. In terms of biological role, a P subtype restriction enzyme that recognizes the double-stranded sequence 5'-CTAG-3'; the cleavage site is unknown. In Methanocaldococcus jannaschii (strain ATCC 43067 / DSM 2661 / JAL-1 / JCM 10045 / NBRC 100440) (Methanococcus jannaschii), this protein is Type II restriction enzyme MjaI (mjaIR).